An 87-amino-acid polypeptide reads, in one-letter code: MAKATSSLVVPIIFLVIFALVEQNTGCFDYDVYQPCDHCRERCLKYYPVTRKAICRKNHCVCIGPCPDDKAIPDVKLFKNVKEQILS.

Residues 1 to 23 (MAKATSSLVVPIIFLVIFALVEQ) form the signal peptide. 4 disulfides stabilise this stretch: Cys-27/Cys-66, Cys-36/Cys-55, Cys-39/Cys-60, and Cys-43/Cys-62.

This sequence belongs to the DEFL family.

Its subcellular location is the secreted. The sequence is that of Defensin-like protein 176 (LCR65) from Arabidopsis thaliana (Mouse-ear cress).